The following is a 121-amino-acid chain: Protein TCL1B5 (121 aa).

Belongs to the TCL1 family.

The protein is Protein TCL1B5 (Tcl1b5) of Mus musculus (Mouse).